We begin with the raw amino-acid sequence, 583 residues long: Septin-9 (583 aa).

The residue at position 1 (Met-1) is an N-acetylmethionine. The span at 1-14 (MKKSYSGVTRTSSG) shows a compositional bias: polar residues. Residues 1-49 (MKKSYSGVTRTSSGRLRRLADPTGPALKRSFEVEEIEPPNSTPPRRVQT) are disordered. Position 30 is a phosphoserine (Ser-30). Thr-42 and Thr-49 each carry phosphothreonine. Lys-62 carries the post-translational modification N6-acetyllysine. A disordered region spans residues 79 to 105 (DSLSQRSPKPSLRRVELAGAKAPEPMS). A phosphoserine mark is found at Ser-82, Ser-85, and Ser-89. At Thr-143 the chain carries Phosphothreonine. The tract at residues 166–252 (VETPASKIPE…TPSCVGDMAD (87 aa)) is disordered. Polar residues predominate over residues 204–221 (LPSQTLENSEAPMSQLQS). Tyr-276 is subject to Phosphotyrosine. A Septin-type G domain is found at 293–565 (QGFEFNIMVV…EAYRVKRLNE (273 aa)). Positions 303-310 (GQSGLGKS) are G1 motif. 303-310 (GQSGLGKS) provides a ligand contact to GTP. Phosphoserine is present on residues Ser-325 and Ser-330. GTP is bound by residues Thr-337, Gly-363, 443–451 (KADTLTLEE), Gly-499, and Arg-514. The tract at residues 360-363 (DTPG) is G3 motif. The segment at 442–445 (AKAD) is G4 motif.

The protein belongs to the TRAFAC class TrmE-Era-EngA-EngB-Septin-like GTPase superfamily. Septin GTPase family. As to quaternary structure, septins polymerize into heterooligomeric protein complexes that form filaments, and associate with cellular membranes, actin filaments, and microtubules. GTPase activity is required for filament formation. Interacts with SEPTIN2, SEPTIN6, SEPTIN7, SEPTIN11 and SEPTIN14. Interacts with RTKN and ARHGEF18. As to expression, expressed in all tissues examined except muscle. Isoforms are differentially expressed in testes, kidney, liver, heart, spleen and brain.

The protein resides in the cytoplasm. It localises to the cytoskeleton. In terms of biological role, filament-forming cytoskeletal GTPase. May play a role in cytokinesis (Potential). The chain is Septin-9 from Mus musculus (Mouse).